The sequence spans 417 residues: Serine hydroxymethyltransferase (417 aa).

(6S)-5,6,7,8-tetrahydrofolate is bound by residues Leu-121 and 125–127 (GHL). The residue at position 229 (Lys-229) is an N6-(pyridoxal phosphate)lysine. 355–357 (SPF) contributes to the (6S)-5,6,7,8-tetrahydrofolate binding site.

This sequence belongs to the SHMT family. Homodimer. It depends on pyridoxal 5'-phosphate as a cofactor.

The protein localises to the cytoplasm. It carries out the reaction (6R)-5,10-methylene-5,6,7,8-tetrahydrofolate + glycine + H2O = (6S)-5,6,7,8-tetrahydrofolate + L-serine. It participates in one-carbon metabolism; tetrahydrofolate interconversion. Its pathway is amino-acid biosynthesis; glycine biosynthesis; glycine from L-serine: step 1/1. Its function is as follows. Catalyzes the reversible interconversion of serine and glycine with tetrahydrofolate (THF) serving as the one-carbon carrier. This reaction serves as the major source of one-carbon groups required for the biosynthesis of purines, thymidylate, methionine, and other important biomolecules. Also exhibits THF-independent aldolase activity toward beta-hydroxyamino acids, producing glycine and aldehydes, via a retro-aldol mechanism. In Yersinia pestis bv. Antiqua (strain Antiqua), this protein is Serine hydroxymethyltransferase.